The primary structure comprises 286 residues: Acyl-CoA thioesterase 2 (286 aa).

Residues D204, T228, and Q278 each act as charge relay system in the active site.

The protein belongs to the C/M/P thioester hydrolase family. As to quaternary structure, homotetramer.

The catalysed reaction is a fatty acyl-CoA + H2O = a fatty acid + CoA + H(+). In terms of biological role, thioesterase that has relatively broad substrate specificity, hydrolyzing primarily medium- and long-chain acyl-CoA substrates to free fatty acids and CoA. The protein is Acyl-CoA thioesterase 2 (tesB) of Haemophilus influenzae (strain ATCC 51907 / DSM 11121 / KW20 / Rd).